A 287-amino-acid chain; its full sequence is Phosphoribosylaminoimidazole-succinocarboxamide synthase (287 aa).

The protein belongs to the SAICAR synthetase family.

The catalysed reaction is 5-amino-1-(5-phospho-D-ribosyl)imidazole-4-carboxylate + L-aspartate + ATP = (2S)-2-[5-amino-1-(5-phospho-beta-D-ribosyl)imidazole-4-carboxamido]succinate + ADP + phosphate + 2 H(+). Its pathway is purine metabolism; IMP biosynthesis via de novo pathway; 5-amino-1-(5-phospho-D-ribosyl)imidazole-4-carboxamide from 5-amino-1-(5-phospho-D-ribosyl)imidazole-4-carboxylate: step 1/2. This is Phosphoribosylaminoimidazole-succinocarboxamide synthase from Neisseria meningitidis serogroup A / serotype 4A (strain DSM 15465 / Z2491).